We begin with the raw amino-acid sequence, 286 residues long: Bifunctional protein FolD (286 aa).

NADP(+) is bound by residues 165–167 (GRS), Ser190, and Val231.

Belongs to the tetrahydrofolate dehydrogenase/cyclohydrolase family. As to quaternary structure, homodimer.

The catalysed reaction is (6R)-5,10-methylene-5,6,7,8-tetrahydrofolate + NADP(+) = (6R)-5,10-methenyltetrahydrofolate + NADPH. The enzyme catalyses (6R)-5,10-methenyltetrahydrofolate + H2O = (6R)-10-formyltetrahydrofolate + H(+). Its pathway is one-carbon metabolism; tetrahydrofolate interconversion. Functionally, catalyzes the oxidation of 5,10-methylenetetrahydrofolate to 5,10-methenyltetrahydrofolate and then the hydrolysis of 5,10-methenyltetrahydrofolate to 10-formyltetrahydrofolate. The sequence is that of Bifunctional protein FolD from Bacillus thuringiensis (strain Al Hakam).